We begin with the raw amino-acid sequence, 204 residues long: Dephospho-CoA kinase (204 aa).

Positions 5 to 204 (VVGLTGGIGS…YLANLVKAML (200 aa)) constitute a DPCK domain. 13–18 (GSGKSA) contributes to the ATP binding site.

The protein belongs to the CoaE family.

The protein resides in the cytoplasm. It catalyses the reaction 3'-dephospho-CoA + ATP = ADP + CoA + H(+). Its pathway is cofactor biosynthesis; coenzyme A biosynthesis; CoA from (R)-pantothenate: step 5/5. Functionally, catalyzes the phosphorylation of the 3'-hydroxyl group of dephosphocoenzyme A to form coenzyme A. The sequence is that of Dephospho-CoA kinase from Chromobacterium violaceum (strain ATCC 12472 / DSM 30191 / JCM 1249 / CCUG 213 / NBRC 12614 / NCIMB 9131 / NCTC 9757 / MK).